The sequence spans 705 residues: UvrABC system protein C (705 aa).

One can recognise a GIY-YIG domain in the interval 16 to 95; the sequence is ETPGVYRFRD…IKQFDPRFNV (80 aa). Positions 208 to 243 constitute a UVR domain; it reads GRYLRRLEREMQQAAQAQEYERAARLRDDIGALRRA. Positions 315 to 332 are enriched in low complexity; that stretch reads AASTGTAGSTVPTTTAGS. Disordered regions lie at residues 315–335 and 683–705; these read AAST…SQGE and RADA…ETVS.

Belongs to the UvrC family. As to quaternary structure, interacts with UvrB in an incision complex.

It localises to the cytoplasm. Its function is as follows. The UvrABC repair system catalyzes the recognition and processing of DNA lesions. UvrC both incises the 5' and 3' sides of the lesion. The N-terminal half is responsible for the 3' incision and the C-terminal half is responsible for the 5' incision. This Frankia casuarinae (strain DSM 45818 / CECT 9043 / HFP020203 / CcI3) protein is UvrABC system protein C.